The following is a 482-amino-acid chain: MKEPLQKKKVVVRHLPPSLSQSDLLSQIDPRFADRYNWVSFRPGKSSYKNQKYSRAYVSFKAPEDVYEFAAFFNGHVFVNEKGAQFKAIVEYAPSQRVPKPSDKKDPREGSISKDPDYLEFLKVIAQPVENLPSAEIQLERREAEQSGASKAAPIVTPLMEFIRQKRATVMGPQGLSDIRRGGRRTRVVSANKPSPRPSKRNSEKKKYVEKESSKNVPRKTTADVSSSKPDYRQSNSSGKELPGNETAAIIDSSPPGIALTMDSGKKKILLLRSKDRDNPDNPPPQPEQHIDTNLSRNSTDSRQNQKSDVGGRLIKGILLRNDSRPSQSSTFVQSEQRVEPSEAENYKRPSRPANTRAGKDYHTSGTISEKQERRTRNKDRPDRVMWAPRRDGSEDQPLSSAGNNGEVKDRMFSQRSGEVVNSSGGHTLENGSARHSSRRVGGRNRKEEVVIGEGKTSRRGSGGGPSSHEKQMWIQKPSSGT.

The tract at residues 9–14 (KVVVRH) is binds to UPF2. The tract at residues 9–219 (KVVVRHLPPS…EKESSKNVPR (211 aa)) is necessary for interaction with UPF2. Residues 53 to 482 (YSRAYVSFKA…MWIQKPSSGT (430 aa)) form a sufficient for association with EJC core region. A disordered region spans residues 173–482 (PQGLSDIRRG…MWIQKPSSGT (310 aa)). The segment covering 201 to 214 (RNSEKKKYVEKESS) has biased composition (basic and acidic residues). Polar residues-rich tracts occupy residues 223 to 239 (ADVS…NSSG), 292 to 308 (DTNL…NQKS), and 325 to 336 (RPSQSSTFVQSE). Composition is skewed to basic and acidic residues over residues 337-348 (QRVEPSEAENYK) and 370-394 (EKQE…RDGS). Over residues 414–435 (SQRSGEVVNSSGGHTLENGSAR) the composition is skewed to polar residues.

It belongs to the RENT3 family. Found in a post-splicing messenger ribonucleoprotein (mRNP) complex. Associates with the exon junction complex (EJC). Interacts with CPL1/FRY2.

It localises to the nucleus. Its subcellular location is the nucleolus. The protein localises to the cytoplasm. Functionally, recruits UPF2 at the cytoplasmic side of the nuclear envelope and the subsequent formation of an UPF1-UPF2-UPF3 surveillance complex (including UPF1 bound to release factors at the stalled ribosome) is believed to activate NMD. Binds spliced mRNA upstream of exon-exon junctions. Involved in nonsense-mediated decay (NMD) of mRNAs containing premature stop codons (premature termination codon PTC) by associating with the nuclear exon junction complex (EJC) and serving as link between the EJC core and NMD machinery. Eliminates the production of nonsense-containing RNAs (ncRNAs). Required for plant development and adaptation to environmental stresses, including plant defense and response to wounding. The chain is Regulator of nonsense transcripts UPF3 from Arabidopsis thaliana (Mouse-ear cress).